We begin with the raw amino-acid sequence, 514 residues long: 2,3-bisphosphoglycerate-independent phosphoglycerate mutase (514 aa).

Positions 14 and 64 each coordinate Mn(2+). Catalysis depends on serine 64, which acts as the Phosphoserine intermediate. Residues histidine 125, 155–156, arginine 187, arginine 193, 263–266, and lysine 336 contribute to the substrate site; these read RD and RADR. Mn(2+)-binding residues include aspartate 403, histidine 407, aspartate 444, histidine 445, and histidine 463.

The protein belongs to the BPG-independent phosphoglycerate mutase family. In terms of assembly, monomer. Mn(2+) serves as cofactor.

It carries out the reaction (2R)-2-phosphoglycerate = (2R)-3-phosphoglycerate. The protein operates within carbohydrate degradation; glycolysis; pyruvate from D-glyceraldehyde 3-phosphate: step 3/5. Catalyzes the interconversion of 2-phosphoglycerate and 3-phosphoglycerate. The protein is 2,3-bisphosphoglycerate-independent phosphoglycerate mutase of Shigella dysenteriae serotype 1 (strain Sd197).